Here is a 67-residue protein sequence, read N- to C-terminus: DNA-directed RNA polymerases I, II, and III subunit RPABC5 (67 aa).

Zn(2+) is bound by residues cysteine 7, cysteine 10, cysteine 44, and cysteine 45.

The protein belongs to the archaeal Rpo10/eukaryotic RPB10 RNA polymerase subunit family. Component of the RNA polymerase I (Pol I), RNA polymerase II (Pol II) and RNA polymerase III (Pol III) complexes consisting of at least 13, 12 and 17 subunits, respectively.

It localises to the nucleus. DNA-dependent RNA polymerase catalyzes the transcription of DNA into RNA using the four ribonucleoside triphosphates as substrates. Common component of RNA polymerases I, II and III which synthesize ribosomal RNA precursors, mRNA precursors and many functional non-coding RNAs, and a small RNAs, such as 5S rRNA and tRNAs, respectively. Pol II is the central component of the basal RNA polymerase II transcription machinery. Pols are composed of mobile elements that move relative to each other. In Pol II, Polr2L is part of the core element with the central large cleft. The sequence is that of DNA-directed RNA polymerases I, II, and III subunit RPABC5 from Drosophila melanogaster (Fruit fly).